The sequence spans 1022 residues: Leucine--tRNA ligase (1022 aa).

A 'HIGH' region motif is present at residues 47-57 (PYPNSPMHLGH). A 'KMSKS' region motif is present at residues 697–701 (KMSKS). Lysine 700 is an ATP binding site.

It belongs to the class-I aminoacyl-tRNA synthetase family.

It is found in the cytoplasm. It carries out the reaction tRNA(Leu) + L-leucine + ATP = L-leucyl-tRNA(Leu) + AMP + diphosphate. This chain is Leucine--tRNA ligase, found in Ignicoccus hospitalis (strain KIN4/I / DSM 18386 / JCM 14125).